Reading from the N-terminus, the 1901-residue chain is A-kinase anchor protein 11 (1901 aa).

Phosphoserine is present on residues Ser-18, Ser-422, Ser-433, Ser-444, and Ser-448. Residues 407–443 (ALPANVRKPTPRKPESPYGNLCDAPDSPRPVKASRED) form a disordered region. Disordered regions lie at residues 843–864 (NPGNQNDFKPTNDDIEMQSSSK) and 971–993 (LPVSGEESQLTPEKSPKFPDSQN). Thr-981 and Thr-1100 each carry phosphothreonine. Residues 1131–1153 (EFAPATPPSTPHNSSVGSLSENE) form a disordered region. The span at 1141–1153 (PHNSSVGSLSENE) shows a compositional bias: polar residues. 5 positions are modified to phosphoserine: Ser-1171, Ser-1176, Ser-1177, Ser-1242, and Ser-1337. A Phosphothreonine modification is found at Thr-1485. Residue Ser-1580 is modified to Phosphoserine. Residues 1650–1663 (LAEKIVAEAIEKAE) form a PKA-RII subunit binding domain region. Residues 1708 to 1805 (KEIEDFQSTE…HEDEVEGLGQ (98 aa)) are disordered. Polar residues predominate over residues 1713–1740 (FQSTESVSSQQMNLSIGDDSTGSWSNLS). Positions 1747–1756 (DESSSFHHLS) are enriched in basic and acidic residues. The span at 1757-1772 (ESNGNSSSWSSLGLEG) shows a compositional bias: low complexity. The segment covering 1787 to 1801 (DGPDDKDEEHEDEVE) has biased composition (acidic residues).

This sequence belongs to the AKAP110 family. Expressed in heart, brain, lung, liver, kidney, testis and ovary. Weakly expressed in skeletal muscle, pancreas and spleen.

It localises to the cytoplasm. It is found in the cytoskeleton. Its subcellular location is the microtubule organizing center. The protein resides in the centrosome. Its function is as follows. Binds to type II regulatory subunits of protein kinase A and anchors/targets them. The protein is A-kinase anchor protein 11 (AKAP11) of Homo sapiens (Human).